The following is a 106-amino-acid chain: Large ribosomal subunit protein uL24 (106 aa).

It belongs to the universal ribosomal protein uL24 family. As to quaternary structure, part of the 50S ribosomal subunit.

One of two assembly initiator proteins, it binds directly to the 5'-end of the 23S rRNA, where it nucleates assembly of the 50S subunit. In terms of biological role, one of the proteins that surrounds the polypeptide exit tunnel on the outside of the subunit. In Alkalilimnicola ehrlichii (strain ATCC BAA-1101 / DSM 17681 / MLHE-1), this protein is Large ribosomal subunit protein uL24.